Here is a 110-residue protein sequence, read N- to C-terminus: Endoribonuclease SymE (110 aa).

Positions 29-74 (SRYPDYTRIPALTMKGQWLEAAGFATGTEVDVRVMNGCIVLTAQQP) constitute a SpoVT-AbrB domain.

This sequence belongs to the SymE family.

Its subcellular location is the cytoplasm. Functionally, involved in the degradation and recycling of damaged RNA. It is itself a target for degradation by the ATP-dependent protease Lon. The protein is Endoribonuclease SymE of Salmonella typhi.